A 132-amino-acid polypeptide reads, in one-letter code: ATP synthase epsilon chain (132 aa).

The protein belongs to the ATPase epsilon chain family. In terms of assembly, F-type ATPases have 2 components, CF(1) - the catalytic core - and CF(0) - the membrane proton channel. CF(1) has five subunits: alpha(3), beta(3), gamma(1), delta(1), epsilon(1). CF(0) has three main subunits: a, b and c.

Its subcellular location is the cell inner membrane. Produces ATP from ADP in the presence of a proton gradient across the membrane. The polypeptide is ATP synthase epsilon chain (atpC) (Aquifex aeolicus (strain VF5)).